We begin with the raw amino-acid sequence, 242 residues long: Eukaryotic translation initiation factor 3 subunit J (242 aa).

Residues 1–10 (MASWDDEDFE) are compositionally biased toward acidic residues. 3 disordered regions span residues 1-58 (MASW…KAQR), 71-97 (MKLK…MMNA), and 201-242 (REEK…DDFM). Residues 11–21 (VPAAATPAVPA) show a composition bias toward low complexity. The span at 23 to 38 (WDDDEEEDVMDSWDAE) shows a compositional bias: acidic residues. Residues 71-89 (MKLKPEDASTKRDRQRQAE) are compositionally biased toward basic and acidic residues.

Belongs to the eIF-3 subunit J family. In terms of assembly, component of the eukaryotic translation initiation factor 3 (eIF-3) complex.

The protein localises to the cytoplasm. Its function is as follows. Component of the eukaryotic translation initiation factor 3 (eIF-3) complex, which is involved in protein synthesis of a specialized repertoire of mRNAs and, together with other initiation factors, stimulates binding of mRNA and methionyl-tRNAi to the 40S ribosome. The eIF-3 complex specifically targets and initiates translation of a subset of mRNAs involved in cell proliferation. The protein is Eukaryotic translation initiation factor 3 subunit J of Yarrowia lipolytica (strain CLIB 122 / E 150) (Yeast).